Consider the following 533-residue polypeptide: Di/tripeptide-binding protein 4 (533 aa).

The N-terminal stretch at 1–25 is a signal peptide; it reads MLHPLLRHLPLALALALCAAGAAQA.

It belongs to the bacterial solute-binding protein 5 family. In terms of assembly, the complex is composed of two ATP-binding proteins (DppD and DppF), two transmembrane proteins (DppB and DppC) and a solute-binding protein (DppA4). Five orthologous SBPs (DppA1-A5) are present in P.aeruginosa, which increases the substrate specificity of the DppBCDF transporter.

Its function is as follows. Part of the ABC transporter DppABCDF involved in the uptake of various di/tripeptides. Prefers dipeptides with acidic residues at the C-terminal end. Efficiently uses tripeptides. The chain is Di/tripeptide-binding protein 4 from Pseudomonas aeruginosa (strain UCBPP-PA14).